The following is a 107-amino-acid chain: Putative double-stranded DNA mimic protein ECA2319 (107 aa).

The protein belongs to the putative dsDNA mimic protein family.

May act as a double-stranded DNA (dsDNA) mimic. Probably regulates the activity of a dsDNA-binding protein. The polypeptide is Putative double-stranded DNA mimic protein ECA2319 (Pectobacterium atrosepticum (strain SCRI 1043 / ATCC BAA-672) (Erwinia carotovora subsp. atroseptica)).